We begin with the raw amino-acid sequence, 468 residues long: Pancreatic lipase-related protein 2 (468 aa).

The N-terminal stretch at 1-16 (MLLCWIVSLLLATVGG) is a signal peptide. Cysteine 20 and cysteine 26 are oxidised to a cystine. The required for galactolipase activity stretch occupies residues 92–104 (VHGFIDKGEDGWL). Cysteine 108 and cysteine 119 are oxidised to a cystine. Serine 170 functions as the Nucleophile in the catalytic mechanism. Residue aspartate 194 is the Charge relay system of the active site. Ca(2+) contacts are provided by glutamate 205, arginine 208, aspartate 210, and aspartate 213. Cysteine 255 and cysteine 279 are oxidised to a cystine. The required for galactolipase activity stretch occupies residues 256–278 (QKNILSTIVDINGIWEGTQNFVA). The Charge relay system role is filled by histidine 281. Intrachain disulfides connect cysteine 303–cysteine 314 and cysteine 317–cysteine 322. Residues asparagine 352 and asparagine 427 are each glycosylated (N-linked (GlcNAc...) asparagine). Positions 356–468 (WRYKVSVTLS…EDVLQSLYPC (113 aa)) constitute a PLAT domain. A disulfide bond links cysteine 452 and cysteine 468.

Belongs to the AB hydrolase superfamily. Lipase family. In terms of tissue distribution, expressed in pancreatic acinar cells (at protein level).

It is found in the secreted. It localises to the zymogen granule membrane. The protein localises to the cell projection. The protein resides in the neuron projection. It catalyses the reaction a triacylglycerol + H2O = a diacylglycerol + a fatty acid + H(+). The enzyme catalyses a 1,2-diacyl-3-O-(beta-D-galactosyl)-sn-glycerol + 2 H2O = 3-beta-D-galactosyl-sn-glycerol + 2 a fatty acid + 2 H(+). The catalysed reaction is 1,2,3-tri-(9Z-octadecenoyl)-glycerol + H2O = di-(9Z)-octadecenoylglycerol + (9Z)-octadecenoate + H(+). It carries out the reaction di-(9Z)-octadecenoylglycerol + H2O = (9Z-octadecenoyl)-glycerol + (9Z)-octadecenoate + H(+). It catalyses the reaction (9Z-octadecenoyl)-glycerol + H2O = glycerol + (9Z)-octadecenoate + H(+). The enzyme catalyses 1-(9Z-octadecenoyl)-glycerol + H2O = glycerol + (9Z)-octadecenoate + H(+). The catalysed reaction is 1,2,3-tripropanoylglycerol + H2O = dipropanoylglycerol + propanoate + H(+). It carries out the reaction 1,2,3-tributanoylglycerol + H2O = dibutanoylglycerol + butanoate + H(+). It catalyses the reaction 1,2,3-trioctanoylglycerol + H2O = dioctanoylglycerol + octanoate + H(+). The enzyme catalyses 1,2-didecanoylglycerol + H2O = decanoylglycerol + decanoate + H(+). The catalysed reaction is long chain 1,2-diacyl-3-O-beta-D-galactosyl-sn-glycerol + H2O = long chain acyl-3-O-beta-D-galactosyl-sn-glycerol + a fatty acid + H(+). It carries out the reaction 1,2-dioctanoyl-3-O-beta-D-galactosyl-sn-glycerol + H2O = octanoyl-3-(beta-D-galactosyl)-sn-glycerol + octanoate + H(+). It catalyses the reaction 1,2-didodecanoyl-3-beta-D-galactosyl-sn-glycerol + H2O = dodecanoyl-3-beta-D-galactosyl-sn-glycerol + dodecanoate + H(+). The enzyme catalyses 1-beta-D-galactosyl-2,3-didodecanoyl-sn-glycerol + H2O = 1-beta-D-galactosyl-dodecanoyl-sn-glycerol + dodecanoate + H(+). The catalysed reaction is a 1,2-diacyl-3-O-[alpha-D-galactosyl-(1-&gt;6)-beta-D-galactosyl]-sn-glycerol + H2O = acyl-3-O-[alpha-D-galactosyl-(1-&gt;6)-beta-D-galactosyl]-sn-glycerol + a fatty acid + H(+). It carries out the reaction long chain 1,2-diacyl-3-O-[alpha-D-galactosyl-(1-&gt;6)-beta-D-galactosyl]-sn-glycerol + H2O = long chain acyl-3-O-[alpha-D-galactosyl-(1-&gt;6)-beta-D-galactosyl]-sn-glycerol + a fatty acid + H(+). It catalyses the reaction 1,2-dioctanoyl-3-O-[alpha-D-galactosyl-(1-&gt;6)-beta-D-galactosyl]-sn-glycerol + H2O = octanoyl-3-O-[alpha-D-galactosyl-(1-&gt;6)-beta-D-galactosyl]-sn-glycerol + octanoate + H(+). The enzyme catalyses 1,2-didodecanoyl-3-O-[alpha-D-galactosyl-(1-&gt;6)-beta-D-galactosyl]-sn-glycerol + H2O = dodecanoyl-3-O-[alpha-D-galactosyl-(1-&gt;6)-beta-D-galactosyl]-sn-glycerol + dodecanoate + H(+). The catalysed reaction is a 1,2-diacyl-sn-glycero-3-phosphocholine + H2O = a monoacyl-sn-glycero-3-phosphocholine + a fatty acid + H(+). Its pathway is glycerolipid metabolism; triacylglycerol degradation. It participates in glycolipid metabolism. Its activity is regulated as follows. CLPS stimulates triacylglycerol lipase activity. Triacylglycerol lipase activity is not inhibited by increasing bile salt concentration. Its function is as follows. Lipase that primarily hydrolyzes triglycerides and galactosylglycerides. In neonates, may play a major role in pancreatic digestion of dietary fats such as milk fat globules enriched in long-chain triglycerides. Hydrolyzes short-, medium- and long-chain fatty acyls in triglycerides without apparent positional specificity. Can completely deacylate triacylglycerols. When the liver matures and bile salt synthesis increases, likely functions mainly as a galactolipase and monoacylglycerol lipase. Hydrolyzes monogalactosyldiglycerols (MGDG) and digalactosyldiacylglycerols (DGDG) present in a plant-based diet, releasing long-chain polyunsaturated fatty acids. Hydrolyzes medium- and long-chain fatty acyls in galactolipids. May act together with LIPF to hydrolyze partially digested triglycerides. Hydrolyzes long-chain monoglycerides with high efficiency. In cytotoxic T cells, contributes to perforin-dependent cell lysis, but is unlikely to mediate direct cytotoxicity. Also has low phospholipase activity. In neurons, required for the localization of the phospholipid 1-oleoyl-2-palmitoyl-PC (OPPC) to neurite tips through acyl chain remodeling of membrane phospholipids. The resulting OPPC-rich lipid membrane domain recruits the t-SNARE protein STX4 by selectively interacting with the STX4 transmembrane domain and this promotes surface expression of the dopamine transporter SLC6A3/DAT at neurite tips by facilitating fusion of SLC6A3-containing transport vesicles with the plasma membrane. This chain is Pancreatic lipase-related protein 2, found in Rattus norvegicus (Rat).